The sequence spans 198 residues: CASP-like protein 4B3 (198 aa).

Residues 1–27 are disordered; the sequence is MSSSGPPAGDGRDDASGPGPAGAAAAA. At 1–51 the chain is on the cytoplasmic side; sequence MSSSGPPAGDGRDDASGPGPAGAAAAADGSVPVSRSIVERWKMEPAAARAR. A compositionally biased stretch (low complexity) spans 16-27; that stretch reads SGPGPAGAAAAA. Residues 52–72 form a helical membrane-spanning segment; the sequence is LLLRAVAWLFSLLALVVMASN. At 73-85 the chain is on the extracellular side; the sequence is KHGHGGAQDFDNY. Residues 86–106 form a helical membrane-spanning segment; it reads PEYTYCLGISIIAVLYTTAQV. The Cytoplasmic portion of the chain corresponds to 107–124; it reads TRDVHRLSWGRDVIAGRK. The helical transmembrane segment at 125 to 145 threads the bilayer; sequence AAAVVDFAGDQVVAYLLMSAL. Residues 146–166 lie on the Extracellular side of the membrane; sequence SAAAPVTDYMRQAADNLFTDS. Residues 167 to 187 traverse the membrane as a helical segment; that stretch reads AAAAISMAFLAFLAAGLSALV. The Cytoplasmic segment spans residues 188–198; it reads SGYNLAMEVLV.

It belongs to the Casparian strip membrane proteins (CASP) family. As to quaternary structure, homodimer and heterodimers.

The protein localises to the cell membrane. In Oryza sativa subsp. japonica (Rice), this protein is CASP-like protein 4B3.